A 133-amino-acid chain; its full sequence is Ribosome-binding factor A (133 aa).

The protein belongs to the RbfA family. As to quaternary structure, monomer. Binds 30S ribosomal subunits, but not 50S ribosomal subunits or 70S ribosomes.

The protein resides in the cytoplasm. In terms of biological role, one of several proteins that assist in the late maturation steps of the functional core of the 30S ribosomal subunit. Associates with free 30S ribosomal subunits (but not with 30S subunits that are part of 70S ribosomes or polysomes). Required for efficient processing of 16S rRNA. May interact with the 5'-terminal helix region of 16S rRNA. This is Ribosome-binding factor A from Yersinia enterocolitica.